A 208-amino-acid chain; its full sequence is Putative archaetidylserine decarboxylase proenzyme (208 aa).

The active-site Schiff-base intermediate with substrate; via pyruvic acid is Ser-172. Pyruvic acid (Ser); by autocatalysis is present on Ser-172.

Belongs to the phosphatidylserine decarboxylase family. PSD-A subfamily. Heterodimer of a large membrane-associated beta subunit and a small pyruvoyl-containing alpha subunit. It depends on pyruvate as a cofactor. Post-translationally, is synthesized initially as an inactive proenzyme. Formation of the active enzyme involves a self-maturation process in which the active site pyruvoyl group is generated from an internal serine residue via an autocatalytic post-translational modification. Two non-identical subunits are generated from the proenzyme in this reaction, and the pyruvate is formed at the N-terminus of the alpha chain, which is derived from the carboxyl end of the proenzyme. The post-translation cleavage follows an unusual pathway, termed non-hydrolytic serinolysis, in which the side chain hydroxyl group of the serine supplies its oxygen atom to form the C-terminus of the beta chain, while the remainder of the serine residue undergoes an oxidative deamination to produce ammonia and the pyruvoyl prosthetic group on the alpha chain.

It localises to the cell membrane. It carries out the reaction archaetidylserine + H(+) = archaetidylethanolamine + CO2. Functionally, catalyzes the formation of archaetidylethanolamine (PtdEtn) from archaetidylserine (PtdSer). The protein is Putative archaetidylserine decarboxylase proenzyme of Methanosarcina acetivorans (strain ATCC 35395 / DSM 2834 / JCM 12185 / C2A).